Reading from the N-terminus, the 174-residue chain is ATP-dependent protease subunit HslV (174 aa).

Residue threonine 2 is part of the active site. Glycine 157, cysteine 160, and threonine 163 together coordinate Na(+).

This sequence belongs to the peptidase T1B family. HslV subfamily. In terms of assembly, a double ring-shaped homohexamer of HslV is capped on each side by a ring-shaped HslU homohexamer. The assembly of the HslU/HslV complex is dependent on binding of ATP.

The protein localises to the cytoplasm. The catalysed reaction is ATP-dependent cleavage of peptide bonds with broad specificity.. Its activity is regulated as follows. Allosterically activated by HslU binding. Functionally, protease subunit of a proteasome-like degradation complex believed to be a general protein degrading machinery. This is ATP-dependent protease subunit HslV from Yersinia pseudotuberculosis serotype I (strain IP32953).